The primary structure comprises 625 residues: tRNA uridine 5-carboxymethylaminomethyl modification enzyme MnmG (625 aa).

14–19 (GAGHAG) provides a ligand contact to FAD. Position 273–287 (273–287 (GPRYCPSIEDKIVRF)) interacts with NAD(+).

This sequence belongs to the MnmG family. As to quaternary structure, homodimer. Heterotetramer of two MnmE and two MnmG subunits. FAD serves as cofactor.

It is found in the cytoplasm. Its function is as follows. NAD-binding protein involved in the addition of a carboxymethylaminomethyl (cmnm) group at the wobble position (U34) of certain tRNAs, forming tRNA-cmnm(5)s(2)U34. This chain is tRNA uridine 5-carboxymethylaminomethyl modification enzyme MnmG, found in Clostridium botulinum (strain Okra / Type B1).